The chain runs to 421 residues: Serine--tRNA ligase (421 aa).

229–231 (TSE) is a binding site for L-serine. ATP-binding positions include 260–262 (RKE) and Val-276. Position 283 (Glu-283) interacts with L-serine. Residue 347–350 (EIVS) participates in ATP binding. Residue Thr-383 participates in L-serine binding.

Belongs to the class-II aminoacyl-tRNA synthetase family. Type-1 seryl-tRNA synthetase subfamily. In terms of assembly, homodimer. The tRNA molecule binds across the dimer.

It is found in the cytoplasm. The enzyme catalyses tRNA(Ser) + L-serine + ATP = L-seryl-tRNA(Ser) + AMP + diphosphate + H(+). It catalyses the reaction tRNA(Sec) + L-serine + ATP = L-seryl-tRNA(Sec) + AMP + diphosphate + H(+). Its pathway is aminoacyl-tRNA biosynthesis; selenocysteinyl-tRNA(Sec) biosynthesis; L-seryl-tRNA(Sec) from L-serine and tRNA(Sec): step 1/1. In terms of biological role, catalyzes the attachment of serine to tRNA(Ser). Is also able to aminoacylate tRNA(Sec) with serine, to form the misacylated tRNA L-seryl-tRNA(Sec), which will be further converted into selenocysteinyl-tRNA(Sec). This chain is Serine--tRNA ligase, found in Nitrosopumilus maritimus (strain SCM1).